A 155-amino-acid polypeptide reads, in one-letter code: Sec-independent protein translocase protein TatB (155 aa).

A helical transmembrane segment spans residues 1-21 (MIDLGISKIALIGAVALIVIG). Disordered stretches follow at residues 81–103 (ASDFEKSWSETTGSTSSDALPGF) and 131–155 (SGIRTKAQSGAARVARFRPQPSRKA). Over residues 89–98 (SETTGSTSSD) the composition is skewed to polar residues.

Belongs to the TatB family. In terms of assembly, the Tat system comprises two distinct complexes: a TatABC complex, containing multiple copies of TatA, TatB and TatC subunits, and a separate TatA complex, containing only TatA subunits. Substrates initially bind to the TatABC complex, which probably triggers association of the separate TatA complex to form the active translocon.

The protein resides in the cell inner membrane. In terms of biological role, part of the twin-arginine translocation (Tat) system that transports large folded proteins containing a characteristic twin-arginine motif in their signal peptide across membranes. Together with TatC, TatB is part of a receptor directly interacting with Tat signal peptides. TatB may form an oligomeric binding site that transiently accommodates folded Tat precursor proteins before their translocation. The protein is Sec-independent protein translocase protein TatB of Polaromonas naphthalenivorans (strain CJ2).